Here is a 671-residue protein sequence, read N- to C-terminus: cGMP-dependent protein kinase 1 (671 aa).

Ser-2 carries the post-translational modification N-acetylserine. Residues Ser-2–Thr-59 are a coiled coil. The tract at residues Ser-2 to Asp-102 is required for dimerization. Positions Ala-9–Gln-44 are leucine-zipper. Positions Pro-50 to His-75 are autoinhibitory domain. Thr-59 is modified (phosphothreonine; by autocatalysis). Residues Phe-103–Pro-220 are cGMP-binding, high affinity. 3',5'-cyclic AMP contacts are provided by residues Gly-167 to Ala-170 and Arg-177 to Thr-178. 3',5'-cyclic GMP is bound by residues Gly-167 to Ala-170, Arg-177 to Thr-178, Arg-282, Gly-291 to Ala-294, Arg-301 to Thr-302, and Tyr-336. Positions Thr-221–Ala-341 are cGMP-binding, low affinity. 3',5'-cyclic AMP is bound by residues Gly-291–Ala-294, Arg-301–Thr-302, and Tyr-336. The Protein kinase domain maps to Phe-360–Phe-619. Residues Leu-366 to Val-374 and Lys-390 each bind ATP. Catalysis depends on Asp-484, which acts as the Proton acceptor. Thr-515 is subject to Phosphothreonine. In terms of domain architecture, AGC-kinase C-terminal spans Glu-620–Phe-671. Positions Pro-635–Phe-671 are disordered. A compositionally biased stretch (acidic residues) spans Phe-652 to Pro-661.

It belongs to the protein kinase superfamily. AGC Ser/Thr protein kinase family. cGMP subfamily. Isoform alpha: parallel homodimer or heterodimer and also heterotetramer. Interacts directly with PPP1R12A. Non-covalent dimer of dimer of PRKG1-PRKG1 and PPP1R12A-PPP1R12A. This interaction targets PRKG1 to stress fibers to mediate smooth muscle cell relaxation and vasodilation in responses to rises in cGMP. Isoform beta: antiparallel homodimer. Part of cGMP kinase signaling complex at least composed of ACTA2/alpha-actin, CNN1/calponin H1, PLN/phospholamban, PRKG1 and ITPR1. Interacts with IRAG1. Forms a stable complex with ITPR1, IRAG1, and isoform beta of PRKG1. Interacts with TRPC7 (via ankyrin repeat domain). Isoform alpha interacts with RGS2. Interacts with GTF2I. In terms of processing, autophosphorylation increases kinase activity. 65 kDa monomer is produced by proteolytic cleavage. As to expression, primarily expressed in lung and placenta.

The protein localises to the cytoplasm. It carries out the reaction L-seryl-[protein] + ATP = O-phospho-L-seryl-[protein] + ADP + H(+). It catalyses the reaction L-threonyl-[protein] + ATP = O-phospho-L-threonyl-[protein] + ADP + H(+). Its activity is regulated as follows. In the absence of cGMP, PRKG1 activity is suppressed by autoinhibitory contacts. Serine/threonine protein kinase that acts as a key mediator of the nitric oxide (NO)/cGMP signaling pathway. GMP binding activates PRKG1, which phosphorylates serines and threonines on many cellular proteins. Numerous protein targets for PRKG1 phosphorylation are implicated in modulating cellular calcium, but the contribution of each of these targets may vary substantially among cell types. Proteins that are phosphorylated by PRKG1 regulate platelet activation and adhesion, smooth muscle contraction, cardiac function, gene expression, feedback of the NO-signaling pathway, and other processes involved in several aspects of the CNS like axon guidance, hippocampal and cerebellar learning, circadian rhythm and nociception. Smooth muscle relaxation is mediated through lowering of intracellular free calcium, by desensitization of contractile proteins to calcium, and by decrease in the contractile state of smooth muscle or in platelet activation. Regulates intracellular calcium levels via several pathways: phosphorylates IRAG1 and inhibits IP3-induced Ca(2+) release from intracellular stores, phosphorylation of KCNMA1 (BKCa) channels decreases intracellular Ca(2+) levels, which leads to increased opening of this channel. PRKG1 phosphorylates the canonical transient receptor potential channel (TRPC) family which inactivates the associated inward calcium current. Another mode of action of NO/cGMP/PKGI signaling involves PKGI-mediated inactivation of the Ras homolog gene family member A (RhoA). Phosphorylation of RHOA by PRKG1 blocks the action of this protein in myriad processes: regulation of RHOA translocation; decreasing contraction; controlling vesicle trafficking, reduction of myosin light chain phosphorylation resulting in vasorelaxation. Activation of PRKG1 by NO signaling also alters gene expression in a number of tissues. In smooth muscle cells, increased cGMP and PRKG1 activity influence expression of smooth muscle-specific contractile proteins, levels of proteins in the NO/cGMP signaling pathway, down-regulation of the matrix proteins osteopontin and thrombospondin-1 to limit smooth muscle cell migration and phenotype. Regulates vasodilator-stimulated phosphoprotein (VASP) functions in platelets and smooth muscle. This chain is cGMP-dependent protein kinase 1 (PRKG1), found in Homo sapiens (Human).